The chain runs to 93 residues: Stromal cell-derived factor 1 (93 aa).

The first 21 residues, 1–21, serve as a signal peptide directing secretion; the sequence is MDIRTLALFSILLGSLCLSEG. Residues 22 to 23 carry the Receptor activation motif motif; that stretch reads KP. The segment at 29-33 is receptor and heparin binding; the sequence is RCPCR. 2 disulfide bridges follow: Cys-30-Cys-55 and Cys-32-Cys-71. Heparin contacts are provided by residues 41–51, Arg-62, Gln-69, and Lys-85; that span reads KSNIKHLKILS. Receptor binding stretches follow at residues 48-50 and 60-64; these read KIL and VARLK.

It belongs to the intercrine alpha (chemokine CxC) family. Monomer or homodimer; in equilibrium. Dimer formation is induced by non acidic pH and the presence of multivalent anions, and by binding to cxcr4 or heparin.

The protein resides in the secreted. Chemoattractant. Activates the C-X-C chemokine receptor cxcr4 to induce a rapid and transient rise in the level of intracellular calcium ions, and chemotaxis. Signaling with cxcr4 mediates the directional movement of mesodermal cells during gastrulation. Binds to the allosteric site (site 2) of integrins and activates them in a cxcr4-independent manner. This Xenopus tropicalis (Western clawed frog) protein is Stromal cell-derived factor 1.